Reading from the N-terminus, the 290-residue chain is Glyceraldehyde-3-phosphate dehydrogenase (290 aa).

Residues aspartate 13 and arginine 58 each coordinate NAD(+). D-glyceraldehyde 3-phosphate contacts are provided by residues 129-131 (SCT), threonine 160, 189-190 (TG), and arginine 212. Catalysis depends on cysteine 130, which acts as the Nucleophile.

The protein belongs to the glyceraldehyde-3-phosphate dehydrogenase family. Homotetramer.

It localises to the cytoplasm. The enzyme catalyses D-glyceraldehyde 3-phosphate + phosphate + NAD(+) = (2R)-3-phospho-glyceroyl phosphate + NADH + H(+). The protein operates within carbohydrate degradation; glycolysis; pyruvate from D-glyceraldehyde 3-phosphate: step 1/5. The sequence is that of Glyceraldehyde-3-phosphate dehydrogenase (GPD) from Lactarius deterrimus (False saffron milkcap).